The primary structure comprises 1313 residues: Inactive protein tyrosine kinase pTKL (1313 aa).

MORN repeat units follow at residues 20 to 42 and 45 to 63; these read YAGD…ENGN and FGHF…IDKN. N-linked (GlcNAc...) asparagine glycosylation is found at Asn-63, Asn-131, Asn-178, Asn-208, Asn-254, Asn-260, and Asn-288. Positions 300–365 constitute an SAM domain; it reads WNKEQVAQWL…LQLIKNLRVT (66 aa). 5 N-linked (GlcNAc...) asparagine glycosylation sites follow: Asn-466, Asn-516, Asn-525, Asn-528, and Asn-534. The span at 569-580 shows a compositional bias: basic and acidic residues; the sequence is EPIKPNKEKEEN. Positions 569 to 631 are disordered; sequence EPIKPNKEKE…SEKSSETSSE (63 aa). Residues 586 to 604 show a composition bias toward polar residues; sequence PIINSKNETNLLNDSNPTK. N-linked (GlcNAc...) asparagine glycans are attached at residues Asn-592, Asn-598, Asn-661, Asn-678, Asn-729, Asn-735, and Asn-749. ATP is bound at residue Lys-782. N-linked (GlcNAc...) asparagine glycosylation is found at Asn-790, Asn-868, Asn-940, Asn-983, and Asn-1000. The Protein kinase domain maps to 962 to 1294; it reads FRNKNNILCG…FDRILIEISM (333 aa). The RVxF motif signature appears at 1052–1055; sequence KILF. 2 N-linked (GlcNAc...) asparagine glycosylation sites follow: Asn-1191 and Asn-1198.

This sequence belongs to the protein kinase superfamily. TKL Ser/Thr protein kinase family.

It localises to the parasitophorous vacuole. It is found in the host cell membrane. The protein localises to the host cytoplasm. Its subcellular location is the host cytoskeleton. This is Inactive protein tyrosine kinase pTKL from Plasmodium berghei (strain Anka).